Reading from the N-terminus, the 277-residue chain is Release factor glutamine methyltransferase (277 aa).

Residues 119–123 (GTGCG), D142, W170, and N184 each bind S-adenosyl-L-methionine. 184–187 (NPPY) is a binding site for substrate.

This sequence belongs to the protein N5-glutamine methyltransferase family. PrmC subfamily.

The enzyme catalyses L-glutaminyl-[peptide chain release factor] + S-adenosyl-L-methionine = N(5)-methyl-L-glutaminyl-[peptide chain release factor] + S-adenosyl-L-homocysteine + H(+). Methylates the class 1 translation termination release factors RF1/PrfA and RF2/PrfB on the glutamine residue of the universally conserved GGQ motif. The protein is Release factor glutamine methyltransferase of Buchnera aphidicola subsp. Baizongia pistaciae (strain Bp).